Consider the following 341-residue polypeptide: Vacuolar morphogenesis protein 7 homolog (341 aa).

One can recognise a PX domain in the interval 1–115 (MALKIKIPET…KFLNIKDESE (115 aa)). The segment covering 214–233 (NSPVAPPSASSQLNSSNPSS) has biased composition (low complexity). Residues 214–265 (NSPVAPPSASSQLNSSNPSSPFRPLSASTDKQSNTSLNRVLGKNRMPETQTT) form a disordered region. Polar residues predominate over residues 239–251 (SASTDKQSNTSLN). One can recognise a t-SNARE coiled-coil homology domain in the interval 278 to 340 (NQTMEDQDMQ…HRTRAGLRKL (63 aa)).

As to quaternary structure, possibly multimeric.

It is found in the vacuole. Its function is as follows. Essential for proper morphogenesis of the vacuole. May exist as structural reinforcement on the surface of the vacuolar membrane and be required for maintenance against rupture by osmotic pressure. The protein is Vacuolar morphogenesis protein 7 homolog of Schizosaccharomyces pombe (strain 972 / ATCC 24843) (Fission yeast).